A 422-amino-acid polypeptide reads, in one-letter code: 5-hydroxytryptamine receptor 1A (422 aa).

At 1–38 the chain is on the extracellular side; sequence MDVLGPGQGNNTTSSEGPFGTRANATGISDVTFSYQVI. N-linked (GlcNAc...) asparagine glycans are attached at residues Asn-10, Asn-11, and Asn-24. Residues 39–59 traverse the membrane as a helical segment; sequence TSLLLGTLIFCAVLGNACVVA. Residues 60–73 are Cytoplasmic-facing; that stretch reads AIALERSLQNVANY. A helical transmembrane segment spans residues 74–98; the sequence is LIGSLAVTDLMVSVLVLPMAALYQV. The Extracellular segment spans residues 99–107; it reads LNKWTLGQV. A helical membrane pass occupies residues 108–132; it reads TCDLFIALDVLCCTSSILHLCAIAL. A disulfide bridge links Cys-109 with Cys-187. The serotonin site is built by Asp-116 and Cys-120. The short motif at 133–135 is the DRY motif; important for ligand-induced conformation changes element; it reads DRY. Residues 133–152 are Cytoplasmic-facing; it reads DRYWAITDPIDYVNKRTPRR. Residues 153 to 174 form a helical membrane-spanning segment; the sequence is AAALISLTWLVGFLISIPPMLG. At 175 to 193 the chain is on the extracellular side; the sequence is WRTPEDRSDPDACTISKDH. A helical membrane pass occupies residues 194-216; sequence GYTIYSTFGAFYIPLLLMLVLYG. Topologically, residues 217 to 346 are cytoplasmic; the sequence is RIFRAARFRI…LARERKTVKT (130 aa). The tract at residues 237 to 262 is disordered; that stretch reads GADSRLGASPAPQRKKSANGELGSRE. Residues Lys-345, Thr-346, and Gly-352 each coordinate 1D-myo-inositol 4-phosphate. The chain crosses the membrane as a helical span at residues 347-370; sequence LGIIMGTFILCWLPFFIVALVLPF. Topologically, residues 371–378 are extracellular; the sequence is CESSCHMP. Residues 379–403 traverse the membrane as a helical segment; it reads TLLGAIINWLGYSNSLLNPVIYAYF. The short motif at 396 to 400 is the NPxxY motif; important for ligand-induced conformation changes and signaling element; that stretch reads NPVIY. 3 residues coordinate 1D-myo-inositol 4-phosphate: Phe-403, Asn-404, and Lys-405. At 404–422 the chain is on the cytoplasmic side; sequence NKDFQNAFKKILKCKFCRR.

Belongs to the G-protein coupled receptor 1 family. 5-hydroxytryptamine receptor subfamily. HTR1A sub-subfamily. As to quaternary structure, heterodimer; heterodimerizes with GPER1. Interacts with YIF1B. Interacts with GPR39 and GALR1.

The protein localises to the cell membrane. The protein resides in the cell projection. It is found in the dendrite. With respect to regulation, G-protein coupled receptor activity is regulated by lipids: phosphatidylinositol 4-phosphate increases HTR1A-mediated activity. Functionally, G-protein coupled receptor for 5-hydroxytryptamine (serotonin). Also functions as a receptor for various drugs and psychoactive substances. Ligand binding causes a conformation change that triggers signaling via guanine nucleotide-binding proteins (G proteins) and modulates the activity of downstream effectors, such as adenylate cyclase. HTR1A is coupled to G(i)/G(o) G alpha proteins and mediates inhibitory neurotransmission: signaling inhibits adenylate cyclase activity and activates a phosphatidylinositol-calcium second messenger system that regulates the release of Ca(2+) ions from intracellular stores. Beta-arrestin family members regulate signaling by mediating both receptor desensitization and resensitization processes. The sequence is that of 5-hydroxytryptamine receptor 1A (HTR1A) from Equus caballus (Horse).